Reading from the N-terminus, the 490-residue chain is Allantoin permease (490 aa).

12 helical membrane passes run 36 to 56 (IWMG…LIAI), 60 to 80 (PWQV…ALAL), 116 to 136 (AIMW…ILLL), 151 to 171 (ILGI…IHLL), 190 to 210 (LVYL…GGLG), 225 to 245 (TFWP…TLIL), 265 to 285 (FYGL…VTSG), 308 to 328 (YVIV…NVAA), 350 to 370 (GSFI…MESA), 373 to 393 (VYAF…VMMA), 425 to 445 (AFAA…VPVL), and 448 to 468 (LYDI…IVLM).

This sequence belongs to the purine-cytosine permease (2.A.39) family.

Its subcellular location is the cell membrane. The catalysed reaction is (S)-allantoin(in) + H(+)(in) = (S)-allantoin(out) + H(+)(out). In terms of biological role, uptake of allantoin into the cell. Allantoin uptake is not dependent on sodium, and PucI is likely to be a proton-coupled symporter. Shows highest recognition for binding of allantoin, good recognition for binding of hydantoin, L-5-benzylhydantoin and 5-hydroxyhydantoin, and to a lesser extent for a range of nucleobases and nucleosides. The chain is Allantoin permease from Bacillus subtilis (strain 168).